A 341-amino-acid chain; its full sequence is Glycerol-3-phosphate dehydrogenase [NAD(P)+] (341 aa).

Ser-17, Trp-18, Arg-37, and Lys-112 together coordinate NADPH. Sn-glycerol 3-phosphate contacts are provided by Lys-112 and Gly-140. Ala-144 is an NADPH binding site. Positions 195, 248, 258, 259, and 260 each coordinate sn-glycerol 3-phosphate. Residue Lys-195 is the Proton acceptor of the active site. Arg-259 contributes to the NADPH binding site. 2 residues coordinate NADPH: Val-283 and Glu-285.

This sequence belongs to the NAD-dependent glycerol-3-phosphate dehydrogenase family.

The protein localises to the cytoplasm. It catalyses the reaction sn-glycerol 3-phosphate + NAD(+) = dihydroxyacetone phosphate + NADH + H(+). The catalysed reaction is sn-glycerol 3-phosphate + NADP(+) = dihydroxyacetone phosphate + NADPH + H(+). It functions in the pathway membrane lipid metabolism; glycerophospholipid metabolism. In terms of biological role, catalyzes the reduction of the glycolytic intermediate dihydroxyacetone phosphate (DHAP) to sn-glycerol 3-phosphate (G3P), the key precursor for phospholipid synthesis. The polypeptide is Glycerol-3-phosphate dehydrogenase [NAD(P)+] (Mycobacterium avium (strain 104)).